The primary structure comprises 879 residues: Beta-mannosidase (879 aa).

Residues 1-17 form the signal peptide; the sequence is MLLRLLLLLAPCGAGFA. Residues asparagine 35 and asparagine 77 are each glycosylated (N-linked (GlcNAc...) asparagine). A disulfide bridge links cysteine 167 with cysteine 176. Residue 190–192 participates in substrate binding; it reads WDW. N-linked (GlcNAc...) asparagine glycosylation is found at asparagine 297 and asparagine 302. Asparagine 456 lines the substrate pocket. Glutamate 457 acts as the Proton donor in catalysis. 3 disulfide bridges follow: cysteine 540-cysteine 629, cysteine 732-cysteine 761, and cysteine 764-cysteine 769. Catalysis depends on glutamate 554, which acts as the Nucleophile. A glycan (N-linked (GlcNAc...) asparagine) is linked at asparagine 607. An N-linked (GlcNAc...) asparagine glycan is attached at asparagine 803.

This sequence belongs to the glycosyl hydrolase 2 family. In terms of assembly, monomer. Post-translationally, the N-terminus is blocked. N-glycosylated. In terms of tissue distribution, detected in kidney (at protein level). Highest expression is found in thyroid tissue. The amount of transcript is significantly higher in normal tissues than in tissues affected by the disease.

It localises to the lysosome. It catalyses the reaction Hydrolysis of terminal, non-reducing beta-D-mannose residues in beta-D-mannosides.. It functions in the pathway glycan metabolism; N-glycan degradation. Exoglycosidase that cleaves the single beta-linked mannose residue from the non-reducing end of all N-linked glycoprotein oligosaccharides. The sequence is that of Beta-mannosidase (MANBA) from Bos taurus (Bovine).